The primary structure comprises 373 residues: ATP phosphoribosyltransferase regulatory subunit (373 aa).

Belongs to the class-II aminoacyl-tRNA synthetase family. HisZ subfamily. In terms of assembly, heteromultimer composed of HisG and HisZ subunits.

It is found in the cytoplasm. The protein operates within amino-acid biosynthesis; L-histidine biosynthesis; L-histidine from 5-phospho-alpha-D-ribose 1-diphosphate: step 1/9. In terms of biological role, required for the first step of histidine biosynthesis. May allow the feedback regulation of ATP phosphoribosyltransferase activity by histidine. The chain is ATP phosphoribosyltransferase regulatory subunit from Rhizobium etli (strain ATCC 51251 / DSM 11541 / JCM 21823 / NBRC 15573 / CFN 42).